The chain runs to 363 residues: Anthranilate phosphoribosyltransferase (363 aa).

Residues Gly85, 88–89 (GD), Thr93, 95–98 (NVST), 113–121 (KHGNRALSS), and Ala125 each bind 5-phospho-alpha-D-ribose 1-diphosphate. Gly85 serves as a coordination point for anthranilate. Ser97 contacts Mg(2+). Position 116 (Asn116) interacts with anthranilate. Arg171 serves as a coordination point for anthranilate. The Mg(2+) site is built by Asp233 and Glu234.

The protein belongs to the anthranilate phosphoribosyltransferase family. As to quaternary structure, homodimer. It depends on Mg(2+) as a cofactor.

It catalyses the reaction N-(5-phospho-beta-D-ribosyl)anthranilate + diphosphate = 5-phospho-alpha-D-ribose 1-diphosphate + anthranilate. Its pathway is amino-acid biosynthesis; L-tryptophan biosynthesis; L-tryptophan from chorismate: step 2/5. In terms of biological role, catalyzes the transfer of the phosphoribosyl group of 5-phosphorylribose-1-pyrophosphate (PRPP) to anthranilate to yield N-(5'-phosphoribosyl)-anthranilate (PRA). The protein is Anthranilate phosphoribosyltransferase of Gluconobacter oxydans (strain 621H) (Gluconobacter suboxydans).